The chain runs to 107 residues: MKDLAQIMQQAQAMQAKMAEVQQKIENTEADGVAGAGLVRVKLRGKGELISVTIDKSLMGDDPEIVEDLIKAAHSDARKRLDQAMEDAMKTATAGFGGMLPGFKLPF.

Belongs to the YbaB/EbfC family. In terms of assembly, homodimer.

It is found in the cytoplasm. It localises to the nucleoid. Its function is as follows. Binds to DNA and alters its conformation. May be involved in regulation of gene expression, nucleoid organization and DNA protection. The chain is Nucleoid-associated protein HNE_0371 from Hyphomonas neptunium (strain ATCC 15444).